The following is a 339-amino-acid chain: Alcohol dehydrogenase (339 aa).

Positions 38, 61, 92, 95, 98, 106, and 148 each coordinate Zn(2+). NAD(+)-binding positions include 172–177 (GIGGLG), Asp-195, Lys-200, 260–262 (VGL), and Arg-331.

Belongs to the zinc-containing alcohol dehydrogenase family. It depends on Zn(2+) as a cofactor.

It carries out the reaction a primary alcohol + NAD(+) = an aldehyde + NADH + H(+). It catalyses the reaction a secondary alcohol + NAD(+) = a ketone + NADH + H(+). The rate-limiting step is NADH release. Catabolite repression. Active with primary alcohols, including methanol. The polypeptide is Alcohol dehydrogenase (adh) (Geobacillus stearothermophilus (Bacillus stearothermophilus)).